The primary structure comprises 315 residues: Mannose-6-phosphate isomerase ManA (315 aa).

Positions 97, 115, and 172 each coordinate Zn(2+). Residue Arg-192 is part of the active site.

It belongs to the mannose-6-phosphate isomerase type 1 family. Zn(2+) is required as a cofactor.

It catalyses the reaction D-mannose 6-phosphate = D-fructose 6-phosphate. This is Mannose-6-phosphate isomerase ManA (manA) from Bacillus subtilis (strain 168).